The following is a 382-amino-acid chain: Ustilagic acid biosynthesis cluster protein orf2 (382 aa).

Residues 1-20 (MLQEAKVSTHTSNPLSQSVP) show a composition bias toward polar residues. The interval 1 to 22 (MLQEAKVSTHTSNPLSQSVPQY) is disordered.

The protein operates within secondary metabolite biosynthesis. Its function is as follows. Part of the gene cluster that mediates the biosynthesis of the glycolipid biosurfactant ustilagic acid (UA). UA is a secreted cellobiose glycolipid that is toxic for many microorganisms and confers biocontrol activity to U.maydis. UA consists of 15,16-dihydroxypalmitic or 2,15,16-trihydroxypalmitic acid, which is O-glycosidically linked to cellobiose at its terminal hydroxyl group. In addition, the cellobiose moiety is acetylated and acylated with a short-chain hydroxy fatty acid. UA biosynthesis starts with omega-hydroxylation of palmitic acid catalyzed by the cytochrome P450 monooxygenase cyp1. Terminal hydroxylation of palmitic acid precedes subterminal hydroxylation catalyzed by the cytochrome P450 monooxygenase cyp2. Sequential glucosylation of the hydroxy fatty acid is probably catalyzed by the glycosyltransferase ugt1. The cellobiose lipid is further decorated by acetylation of the proximal glucose residue and by acylation with a short-chain beta-hydroxy fatty acid at the distal glucose residue. The acyltransferase uat1 may be a good candidate for catalyzing either acetylation or acylation of the cellobiose lipid. The fatty acid synthase fas2 may be involved in synthesis of the carbon backbone of the short-chain beta-hydroxy fatty acid esterified to the cellobiose disaccharide. The secreted UA consists of a mixture of both alpha-hydroxylated and non-hydroxylated glycolipids; therefore, alpha-hydroxylation of the long-chain fatty, catalyzed by the fatty acid hydroxylase ahd1, occurs late in UA biosynthesis and may be the last step before secretion. The chain is Ustilagic acid biosynthesis cluster protein orf2 from Mycosarcoma maydis (Corn smut fungus).